Here is a 310-residue protein sequence, read N- to C-terminus: Ribosomal RNA small subunit methyltransferase H (310 aa).

Residues 32–34 (GGH), aspartate 52, phenylalanine 79, aspartate 100, and glutamine 107 each bind S-adenosyl-L-methionine.

The protein belongs to the methyltransferase superfamily. RsmH family.

The protein resides in the cytoplasm. It carries out the reaction cytidine(1402) in 16S rRNA + S-adenosyl-L-methionine = N(4)-methylcytidine(1402) in 16S rRNA + S-adenosyl-L-homocysteine + H(+). In terms of biological role, specifically methylates the N4 position of cytidine in position 1402 (C1402) of 16S rRNA. The protein is Ribosomal RNA small subunit methyltransferase H of Bacillus cytotoxicus (strain DSM 22905 / CIP 110041 / 391-98 / NVH 391-98).